The sequence spans 369 residues: UDP-N-acetylglucosamine--N-acetylmuramyl-(pentapeptide) pyrophosphoryl-undecaprenol N-acetylglucosamine transferase (369 aa).

UDP-N-acetyl-alpha-D-glucosamine contacts are provided by residues 15-17 (TGG), N126, R169, S197, and Q299.

The protein belongs to the glycosyltransferase 28 family. MurG subfamily.

It localises to the cell inner membrane. The enzyme catalyses di-trans,octa-cis-undecaprenyl diphospho-N-acetyl-alpha-D-muramoyl-L-alanyl-D-glutamyl-meso-2,6-diaminopimeloyl-D-alanyl-D-alanine + UDP-N-acetyl-alpha-D-glucosamine = di-trans,octa-cis-undecaprenyl diphospho-[N-acetyl-alpha-D-glucosaminyl-(1-&gt;4)]-N-acetyl-alpha-D-muramoyl-L-alanyl-D-glutamyl-meso-2,6-diaminopimeloyl-D-alanyl-D-alanine + UDP + H(+). Its pathway is cell wall biogenesis; peptidoglycan biosynthesis. Functionally, cell wall formation. Catalyzes the transfer of a GlcNAc subunit on undecaprenyl-pyrophosphoryl-MurNAc-pentapeptide (lipid intermediate I) to form undecaprenyl-pyrophosphoryl-MurNAc-(pentapeptide)GlcNAc (lipid intermediate II). This chain is UDP-N-acetylglucosamine--N-acetylmuramyl-(pentapeptide) pyrophosphoryl-undecaprenol N-acetylglucosamine transferase, found in Methylorubrum extorquens (strain PA1) (Methylobacterium extorquens).